The following is a 501-amino-acid chain: Cobyric acid synthase (501 aa).

The GATase cobBQ-type domain occupies 253 to 450; sequence EIEIAVLKLP…LHGIFENGRW (198 aa). Cys334 (nucleophile) is an active-site residue. Residue His442 is part of the active site.

It belongs to the CobB/CobQ family. CobQ subfamily.

The protein operates within cofactor biosynthesis; adenosylcobalamin biosynthesis. Functionally, catalyzes amidations at positions B, D, E, and G on adenosylcobyrinic A,C-diamide. NH(2) groups are provided by glutamine, and one molecule of ATP is hydrogenolyzed for each amidation. The protein is Cobyric acid synthase of Prochlorococcus marinus (strain MIT 9313).